A 453-amino-acid chain; its full sequence is Ribosome biogenesis protein YTM1 (453 aa).

The ubiquitin-like (UBL) domain stretch occupies residues 19–102 (VKVRFFTNEE…ETVIDLQYTR (84 aa)). Positions 112 to 453 (SFTNEDWISS…KKIDIYREAN (342 aa)) are sufficient for interaction with ERB1 and association with 66S pre-ribosomes. WD repeat units lie at residues 128 to 166 (GHGAVLASNMKLQESKILSGSYDGVVRTYNMSGEVESQY), 168 to 206 (GHSGPVKSVRWISPTRIVSAGNDHSLRLWKTKLAGVEEG), 218 to 257 (GHKGPVVDLAVDYKSNKIISAGNDSVVGVWSTNASDMSAV), 292 to 332 (GHGQ…CVDT), 334 to 373 (STGFSLLSILQLPNLHLVASGSSARHINLHDPRASSSTEQ), 380 to 420 (GHTN…AMYT), and 422 to 453 (GKGGKVFGVSWDPIGIVSGGEDKKIDIYREAN).

Belongs to the WD repeat WDR12/YTM1 family. As to quaternary structure, component of the NOP7 complex, composed of ERB1, NOP7 and YTM1. The complex is held together by ERB1, which interacts with NOP7 via its N-terminal domain and with YTM1 via a high-affinity interaction between the seven-bladed beta-propeller domains of the 2 proteins. The NOP7 complex associates with the 66S pre-ribosome. Interacts (via UBL domain) with MDN1 (via VWFA/MIDAS domain).

It is found in the nucleus. The protein resides in the nucleolus. Its subcellular location is the nucleoplasm. Its function is as follows. Component of the NOP7 complex, which is required for maturation of the 25S and 5.8S ribosomal RNAs and formation of the 60S ribosome. This chain is Ribosome biogenesis protein YTM1, found in Meyerozyma guilliermondii (strain ATCC 6260 / CBS 566 / DSM 6381 / JCM 1539 / NBRC 10279 / NRRL Y-324) (Yeast).